The following is a 150-amino-acid chain: Small heat shock protein IbpB (150 aa).

Residues 26 to 137 enclose the sHSP domain; sequence SQEPIDFPPY…QPQRIAIGGG (112 aa).

Belongs to the small heat shock protein (HSP20) family. Homodimer. Forms homomultimers of about 100-150 subunits at optimal growth temperatures. Conformation changes to oligomers at high temperatures or high ionic concentrations. The decrease in size of the multimers is accompanied by an increase in chaperone activity.

Its subcellular location is the cytoplasm. In terms of biological role, associates with aggregated proteins, together with IbpA, to stabilize and protect them from irreversible denaturation and extensive proteolysis during heat shock and oxidative stress. Aggregated proteins bound to the IbpAB complex are more efficiently refolded and reactivated by the ATP-dependent chaperone systems ClpB and DnaK/DnaJ/GrpE. Its activity is ATP-independent. The sequence is that of Small heat shock protein IbpB from Pectobacterium atrosepticum (strain SCRI 1043 / ATCC BAA-672) (Erwinia carotovora subsp. atroseptica).